The following is a 280-amino-acid chain: ESX-1 secretion-associated protein EspJ (280 aa).

Phosphoserine is present on Ser70. Low complexity-rich tracts occupy residues 167 to 181 (QTIS…QSAQ) and 246 to 280 (PAQA…TTTL). A disordered region spans residues 167–280 (QTISQTAQQA…TPAPSTTTTL (114 aa)).

Phosphorylated at Ser-70.

It localises to the secreted. In terms of biological role, could be involved in regulation of growth and intracellular survival. This chain is ESX-1 secretion-associated protein EspJ, found in Mycobacterium tuberculosis (strain CDC 1551 / Oshkosh).